Consider the following 117-residue polypeptide: Large ribosomal subunit protein uL18 (117 aa).

Belongs to the universal ribosomal protein uL18 family. Part of the 50S ribosomal subunit; part of the 5S rRNA/L5/L18/L25 subcomplex. Contacts the 5S and 23S rRNAs.

In terms of biological role, this is one of the proteins that bind and probably mediate the attachment of the 5S RNA into the large ribosomal subunit, where it forms part of the central protuberance. This chain is Large ribosomal subunit protein uL18, found in Buchnera aphidicola subsp. Acyrthosiphon kondoi (Acyrthosiphon kondoi symbiotic bacterium).